Consider the following 125-residue polypeptide: Small ribosomal subunit protein uS12m (125 aa).

The segment at 1–51 (MPTKNQLIRHGREEKRRTDRTRALDQCPQKQGVCPRVSTRTPKKPNSAPRK) is disordered. Over residues 10–23 (HGREEKRRTDRTRA) the composition is skewed to basic and acidic residues.

The protein belongs to the universal ribosomal protein uS12 family.

It localises to the mitochondrion. Protein S12 is involved in the translation initiation step. The sequence is that of Small ribosomal subunit protein uS12m (RPS12) from Nicotiana sylvestris (Wood tobacco).